The chain runs to 511 residues: 2-isopropylmalate synthase (511 aa).

The region spanning 5-267 (LIVFDTTLRD…DTRIDATQIV (263 aa)) is the Pyruvate carboxyltransferase domain. D14, H202, H204, and N238 together coordinate Mn(2+). Residues 393–511 (RLVASRFHSE…SKLERLNPQL (119 aa)) form a regulatory domain region.

This sequence belongs to the alpha-IPM synthase/homocitrate synthase family. LeuA type 1 subfamily. As to quaternary structure, homodimer. The cofactor is Mn(2+).

It localises to the cytoplasm. It catalyses the reaction 3-methyl-2-oxobutanoate + acetyl-CoA + H2O = (2S)-2-isopropylmalate + CoA + H(+). Its pathway is amino-acid biosynthesis; L-leucine biosynthesis; L-leucine from 3-methyl-2-oxobutanoate: step 1/4. Catalyzes the condensation of the acetyl group of acetyl-CoA with 3-methyl-2-oxobutanoate (2-ketoisovalerate) to form 3-carboxy-3-hydroxy-4-methylpentanoate (2-isopropylmalate). The chain is 2-isopropylmalate synthase from Aromatoleum aromaticum (strain DSM 19018 / LMG 30748 / EbN1) (Azoarcus sp. (strain EbN1)).